The sequence spans 587 residues: Arginine--tRNA ligase (587 aa).

The 'HIGH' region motif lies at Pro127–His137.

Belongs to the class-I aminoacyl-tRNA synthetase family. As to quaternary structure, monomer.

It is found in the cytoplasm. The catalysed reaction is tRNA(Arg) + L-arginine + ATP = L-arginyl-tRNA(Arg) + AMP + diphosphate. The protein is Arginine--tRNA ligase of Pseudomonas paraeruginosa (strain DSM 24068 / PA7) (Pseudomonas aeruginosa (strain PA7)).